The sequence spans 101 residues: Small ribosomal subunit protein uS14 (101 aa).

It belongs to the universal ribosomal protein uS14 family. As to quaternary structure, part of the 30S ribosomal subunit. Contacts proteins S3 and S10.

Its function is as follows. Binds 16S rRNA, required for the assembly of 30S particles and may also be responsible for determining the conformation of the 16S rRNA at the A site. The sequence is that of Small ribosomal subunit protein uS14 from Acinetobacter baumannii (strain AB307-0294).